The following is an 86-amino-acid chain: Large ribosomal subunit protein eL20 (86 aa).

The protein belongs to the eukaryotic ribosomal protein eL20 family. As to quaternary structure, part of the 50S ribosomal subunit. Binds 23S rRNA.

This is Large ribosomal subunit protein eL20 from Saccharolobus islandicus (strain Y.N.15.51 / Yellowstone #2) (Sulfolobus islandicus).